Consider the following 406-residue polypeptide: Biofilm regulatory protein A (406 aa).

Positions 1–26 (MKIGKKILIMLVTIFLTSLVALGVYA) are cleaved as a signal peptide. Low complexity predominate over residues 347-397 (SSSASDYSSSGNYSGSSSDYGSSSSYGSNSSSGSSSDYSGQNSYNQGNYQQ). Residues 347 to 406 (SSSASDYSSSGNYSGSSSDYGSSSSYGSNSSSGSSSDYSGQNSYNQGNYQQPAAGTGIGN) are disordered.

The protein belongs to the LytR/CpsA/Psr (LCP) family.

The protein localises to the cell envelope. Its function is as follows. Involved in biofilm formation, cell division, autolysis and the regulation of acid and oxidative stress tolerance. May be associated with systemic virulence in blood. The polypeptide is Biofilm regulatory protein A (brpA) (Streptococcus mutans serotype c (strain ATCC 700610 / UA159)).